The primary structure comprises 141 residues: Cell division protein SepF (141 aa).

This sequence belongs to the SepF family. In terms of assembly, homodimer. Interacts with FtsZ.

The protein resides in the cytoplasm. In terms of biological role, cell division protein that is part of the divisome complex and is recruited early to the Z-ring. Probably stimulates Z-ring formation, perhaps through the cross-linking of FtsZ protofilaments. Its function overlaps with FtsA. In Anoxybacillus flavithermus (strain DSM 21510 / WK1), this protein is Cell division protein SepF.